We begin with the raw amino-acid sequence, 222 residues long: Putative serine proteinase inhibitor 2 homolog second part (222 aa).

It belongs to the serpin family. Poxviruses subfamily.

The chain is Putative serine proteinase inhibitor 2 homolog second part from Homo sapiens (Human).